The following is a 208-amino-acid chain: Cytochrome c biogenesis ATP-binding export protein CcmA (208 aa).

One can recognise an ABC transporter domain in the interval 3-206 (LSGKDLAAHR…LEKFVPSQER (204 aa)). 35–42 (GPNGIGKS) contacts ATP.

The protein belongs to the ABC transporter superfamily. CcmA exporter (TC 3.A.1.107) family. The complex is composed of two ATP-binding proteins (CcmA) and two transmembrane proteins (CcmB).

It localises to the cell inner membrane. It carries out the reaction heme b(in) + ATP + H2O = heme b(out) + ADP + phosphate + H(+). Part of the ABC transporter complex CcmAB involved in the biogenesis of c-type cytochromes; once thought to export heme, this seems not to be the case, but its exact role is uncertain. Responsible for energy coupling to the transport system. This is Cytochrome c biogenesis ATP-binding export protein CcmA from Bartonella quintana (strain Toulouse) (Rochalimaea quintana).